Reading from the N-terminus, the 492-residue chain is Ribose import ATP-binding protein RbsA (492 aa).

ABC transporter domains are found at residues 3–239 and 249–492; these read IEMK…VGRS and AEIR…TGGK. ATP is bound at residue 35 to 42; that stretch reads GENGAGKS.

Belongs to the ABC transporter superfamily. Ribose importer (TC 3.A.1.2.1) family. The complex is composed of an ATP-binding protein (RbsA), two transmembrane proteins (RbsC) and a solute-binding protein (RbsB).

The protein resides in the cell membrane. It catalyses the reaction D-ribose(out) + ATP + H2O = D-ribose(in) + ADP + phosphate + H(+). Part of the ABC transporter complex RbsABC involved in ribose import. Responsible for energy coupling to the transport system. The protein is Ribose import ATP-binding protein RbsA of Lactococcus lactis subsp. cremoris (strain SK11).